Consider the following 136-residue polypeptide: 6,7-dimethyl-8-ribityllumazine synthase (136 aa).

Residues Phe11, 43 to 45, and 67 to 69 contribute to the 5-amino-6-(D-ribitylamino)uracil site; these read VYD and CVI. A (2S)-2-hydroxy-3-oxobutyl phosphate-binding site is contributed by 72–73; that stretch reads DT. Residue His75 is the Proton donor of the active site. Leu100 is a 5-amino-6-(D-ribitylamino)uracil binding site. Residue Arg115 participates in (2S)-2-hydroxy-3-oxobutyl phosphate binding.

It belongs to the DMRL synthase family. Forms an icosahedral capsid composed of 60 subunits, arranged as a dodecamer of pentamers.

It carries out the reaction (2S)-2-hydroxy-3-oxobutyl phosphate + 5-amino-6-(D-ribitylamino)uracil = 6,7-dimethyl-8-(1-D-ribityl)lumazine + phosphate + 2 H2O + H(+). The protein operates within cofactor biosynthesis; riboflavin biosynthesis; riboflavin from 2-hydroxy-3-oxobutyl phosphate and 5-amino-6-(D-ribitylamino)uracil: step 1/2. Catalyzes the formation of 6,7-dimethyl-8-ribityllumazine by condensation of 5-amino-6-(D-ribitylamino)uracil with 3,4-dihydroxy-2-butanone 4-phosphate. This is the penultimate step in the biosynthesis of riboflavin. This is 6,7-dimethyl-8-ribityllumazine synthase from Methanococcus aeolicus (strain ATCC BAA-1280 / DSM 17508 / OCM 812 / Nankai-3).